Here is a 446-residue protein sequence, read N- to C-terminus: N-succinylarginine dihydrolase (446 aa).

Substrate is bound by residues 19 to 28 (AGLSFGNEAS), N110, and 137 to 138 (HR). The active site involves E174. Residue R213 participates in substrate binding. Residue H249 is part of the active site. Positions 251 and 364 each coordinate substrate. C370 acts as the Nucleophile in catalysis.

Belongs to the succinylarginine dihydrolase family. Homodimer.

It carries out the reaction N(2)-succinyl-L-arginine + 2 H2O + 2 H(+) = N(2)-succinyl-L-ornithine + 2 NH4(+) + CO2. Its pathway is amino-acid degradation; L-arginine degradation via AST pathway; L-glutamate and succinate from L-arginine: step 2/5. Its function is as follows. Catalyzes the hydrolysis of N(2)-succinylarginine into N(2)-succinylornithine, ammonia and CO(2). The protein is N-succinylarginine dihydrolase of Serratia proteamaculans (strain 568).